Consider the following 440-residue polypeptide: 3-phosphoshikimate 1-carboxyvinyltransferase (440 aa).

Lysine 19, serine 20, and arginine 24 together coordinate 3-phosphoshikimate. Position 19 (lysine 19) interacts with phosphoenolpyruvate. 2 residues coordinate phosphoenolpyruvate: glycine 92 and arginine 121. The 3-phosphoshikimate site is built by serine 166, glutamine 168, aspartate 315, and lysine 342. Glutamine 168 contacts phosphoenolpyruvate. Aspartate 315 functions as the Proton acceptor in the catalytic mechanism. 2 residues coordinate phosphoenolpyruvate: arginine 346 and arginine 399.

The protein belongs to the EPSP synthase family. Monomer.

The protein resides in the cytoplasm. It catalyses the reaction 3-phosphoshikimate + phosphoenolpyruvate = 5-O-(1-carboxyvinyl)-3-phosphoshikimate + phosphate. Its pathway is metabolic intermediate biosynthesis; chorismate biosynthesis; chorismate from D-erythrose 4-phosphate and phosphoenolpyruvate: step 6/7. Its function is as follows. Catalyzes the transfer of the enolpyruvyl moiety of phosphoenolpyruvate (PEP) to the 5-hydroxyl of shikimate-3-phosphate (S3P) to produce enolpyruvyl shikimate-3-phosphate and inorganic phosphate. This Leptospira interrogans serogroup Icterohaemorrhagiae serovar copenhageni (strain Fiocruz L1-130) protein is 3-phosphoshikimate 1-carboxyvinyltransferase.